The following is a 652-amino-acid chain: Sodium-dependent phosphate transporter 2 (652 aa).

The Extracellular segment spans residues 1–5 (MAMDE). A helical membrane pass occupies residues 6–26 (YLWMVILGFIIAFILAFSVGA). The Cytoplasmic portion of the chain corresponds to 27–46 (NDVANSFGTAVGSGVVTLRQ). Residues 47 to 67 (ACILASIFETTGSVLLGAKVG) traverse the membrane as a helical segment. Topologically, residues 68–86 (ETIRKGIIDVNLYNETVET) are extracellular. The N-linked (GlcNAc...) asparagine glycan is linked to Asn-81. Residues 87–107 (LMAGEVSAMVGSAVWQLIASF) form a helical membrane-spanning segment. The Cytoplasmic portion of the chain corresponds to 108–109 (LR). The helical transmembrane segment at 110–130 (LPISGTHCIVGSTIGFSLVAI) threads the bilayer. The Extracellular segment spans residues 131 to 142 (GTKGVQWMELVK). A helical membrane pass occupies residues 143–163 (IVASWFISPLLSGFMSGLLFV). Residues 164 to 190 (LIRIFILKKEDPVPNGLRALPVFYAAT) lie on the Cytoplasmic side of the membrane. A helical membrane pass occupies residues 191–211 (IAINVFSIMYTGAPVLGLVLP). At 212–213 (MW) the chain is on the extracellular side. Residues 214 to 234 (AIALISFGVALLFAFFVWLFV) traverse the membrane as a helical segment. Topologically, residues 235–482 (CPWMRRKITG…EEKEEKDAPE (248 aa)) are cytoplasmic. A phosphoserine mark is found at Ser-253, Ser-256, Ser-259, and Ser-268. The segment at 273–307 (ELPGAKANDDSTIPLTGAAGETLGTSEGTSAGSHP) is disordered. Residues 295-304 (LGTSEGTSAG) are compositionally biased toward polar residues. A phosphoserine mark is found at Ser-316 and Ser-385. The interval 458 to 477 (SELADPDQPREDPAEEEKEE) is disordered. Residues 483 to 503 (VHLLFHFLQVLTACFGSFAHG) traverse the membrane as a helical segment. Residues 504 to 530 (GNDVSNAIGPLVALWLIYKQGGVTQEA) are Extracellular-facing. A helical transmembrane segment spans residues 531–551 (ATPVWLLFYGGVGICTGLWVW). Residues 552 to 571 (GRRVIQTMGKDLTPITPSSG) lie on the Cytoplasmic side of the membrane. The helical transmembrane segment at 572–586 (FTIELASAFTVVIAS) threads the bilayer. Topologically, residues 587 to 593 (NIGLPVS) are extracellular. The chain crosses the membrane as a helical span at residues 594–609 (TTHCKVGSVVAVGWIR). Over 610–621 (SRKAVDWRLFRN) the chain is Cytoplasmic. A helical membrane pass occupies residues 622 to 642 (IFVAWFVTVPVAGLFSAAVMA). The Extracellular segment spans residues 643–652 (LLMYGILPYV).

The protein belongs to the inorganic phosphate transporter (PiT) (TC 2.A.20) family. Homodimer. In terms of tissue distribution, ubiquitously expressed.

It localises to the cell membrane. It is found in the apical cell membrane. The catalysed reaction is 2 Na(+)(out) + phosphate(out) = 2 Na(+)(in) + phosphate(in). Sodium-phosphate symporter which preferentially transports the monovalent form of phosphate with a stoichiometry of two sodium ions per phosphate ion. Plays a critical role in the determination of bone quality and strength by providing phosphate for bone mineralization. Required to maintain normal cerebrospinal fluid phosphate levels. Mediates phosphate-induced calcification of vascular smooth muscle cells (VCMCs) and can functionally compensate for loss of SLC20A1 in VCMCs. Functionally, (Microbial infection) Functions as a retroviral receptor and confers human cells susceptibility to infection to amphotropic murine leukemia virus (A-MuLV), 10A1 murine leukemia virus (10A1 MLV) and some feline leukemia virus subgroup B (FeLV-B) variants. In Homo sapiens (Human), this protein is Sodium-dependent phosphate transporter 2 (SLC20A2).